The chain runs to 137 residues: MVNLGFVIAEFNRDLTFMMEKMAEEHAEFLGANVSHKIMVPGSFDMPLAIKTLLQKDDIDAIVTIGCVIEGDTEHDEIVVQNAARKIADLSLDFGKPVALGIAGPGMTRMQAEDRIDYGKNAVEAAVKMVKRLKEIQ.

5-amino-6-(D-ribitylamino)uracil contacts are provided by residues phenylalanine 11, 43–45 (SFD), and 67–69 (CVI). Residue 72–73 (DT) coordinates (2S)-2-hydroxy-3-oxobutyl phosphate. Histidine 75 functions as the Proton donor in the catalytic mechanism. Residue leucine 100 coordinates 5-amino-6-(D-ribitylamino)uracil. Arginine 115 contacts (2S)-2-hydroxy-3-oxobutyl phosphate.

It belongs to the DMRL synthase family. Forms an icosahedral capsid composed of 60 subunits, arranged as a dodecamer of pentamers.

The catalysed reaction is (2S)-2-hydroxy-3-oxobutyl phosphate + 5-amino-6-(D-ribitylamino)uracil = 6,7-dimethyl-8-(1-D-ribityl)lumazine + phosphate + 2 H2O + H(+). The protein operates within cofactor biosynthesis; riboflavin biosynthesis; riboflavin from 2-hydroxy-3-oxobutyl phosphate and 5-amino-6-(D-ribitylamino)uracil: step 1/2. Its function is as follows. Catalyzes the formation of 6,7-dimethyl-8-ribityllumazine by condensation of 5-amino-6-(D-ribitylamino)uracil with 3,4-dihydroxy-2-butanone 4-phosphate. This is the penultimate step in the biosynthesis of riboflavin. This chain is 6,7-dimethyl-8-ribityllumazine synthase, found in Methanococcus maripaludis (strain DSM 14266 / JCM 13030 / NBRC 101832 / S2 / LL).